The primary structure comprises 377 residues: Serine protease inhibitor (377 aa).

An N-terminal signal peptide occupies residues 1–27 (MAALQAAVSSQLAISFFSSLIVPGAEK). N-linked (GlcNAc...) asparagine glycosylation is present at asparagine 301. The interval 328 to 349 (GTEAAAATGFGVNFMSMPMQVR) is RCL. A glycan (N-linked (GlcNAc...) asparagine) is linked at asparagine 361.

Belongs to the serpin family.

Functionally, inhibitor of serine proteases. Inhibits chymotrypsin, cathepsin G and human neutrophil elastase. This Cyanea capillata (Lion's mane jellyfish) protein is Serine protease inhibitor.